We begin with the raw amino-acid sequence, 342 residues long: Delta(6)-protoilludene synthase 8 (342 aa).

Asp81 serves as a coordination point for Mg(2+). Positions 93–97 (RDMVD) match the DDXXD motif motif. Residues Asn217, Ser221, and Glu225 each coordinate Mg(2+). An NSE/DTE motif motif is present at residues 217–225 (NDLVSYNRE). Residues Arg305 and Tyr306 each coordinate (2E,6E)-farnesyl diphosphate.

Belongs to the terpene synthase family. The cofactor is Mg(2+).

The enzyme catalyses (2E,6E)-farnesyl diphosphate = Delta(6)-protoilludene + diphosphate. Its function is as follows. Terpene cyclase that catalyzes the cyclization of farnesyl diphosphate (FPP) to delta(6)-protoilludene. The sequence is that of Delta(6)-protoilludene synthase 8 from Postia placenta (strain ATCC 44394 / Madison 698-R) (Brown rot fungus).